The following is a 142-amino-acid chain: ATP synthase epsilon chain (142 aa).

This sequence belongs to the ATPase epsilon chain family. F-type ATPases have 2 components, CF(1) - the catalytic core - and CF(0) - the membrane proton channel. CF(1) has five subunits: alpha(3), beta(3), gamma(1), delta(1), epsilon(1). CF(0) has three main subunits: a, b and c.

The protein localises to the cell inner membrane. Produces ATP from ADP in the presence of a proton gradient across the membrane. The sequence is that of ATP synthase epsilon chain from Shewanella frigidimarina (strain NCIMB 400).